A 270-amino-acid chain; its full sequence is Formamidopyrimidine-DNA glycosylase (270 aa).

Pro-2 serves as the catalytic Schiff-base intermediate with DNA. Residue Glu-3 is the Proton donor of the active site. Residue Lys-58 is the Proton donor; for beta-elimination activity of the active site. Positions 91, 109, and 151 each coordinate DNA. The segment at 236–270 adopts an FPG-type zinc-finger fold; sequence LVYGRGGEACKTCQKPLKEIRMNDRTTVYCVTCQQ. Arg-260 acts as the Proton donor; for delta-elimination activity in catalysis.

This sequence belongs to the FPG family. Monomer. It depends on Zn(2+) as a cofactor.

The catalysed reaction is Hydrolysis of DNA containing ring-opened 7-methylguanine residues, releasing 2,6-diamino-4-hydroxy-5-(N-methyl)formamidopyrimidine.. The enzyme catalyses 2'-deoxyribonucleotide-(2'-deoxyribose 5'-phosphate)-2'-deoxyribonucleotide-DNA = a 3'-end 2'-deoxyribonucleotide-(2,3-dehydro-2,3-deoxyribose 5'-phosphate)-DNA + a 5'-end 5'-phospho-2'-deoxyribonucleoside-DNA + H(+). Functionally, involved in base excision repair of DNA damaged by oxidation or by mutagenic agents. Acts as a DNA glycosylase that recognizes and removes damaged bases. Has a preference for oxidized purines, such as 7,8-dihydro-8-oxoguanine (8-oxoG). Has AP (apurinic/apyrimidinic) lyase activity and introduces nicks in the DNA strand. Cleaves the DNA backbone by beta-delta elimination to generate a single-strand break at the site of the removed base with both 3'- and 5'-phosphates. The chain is Formamidopyrimidine-DNA glycosylase from Cellvibrio japonicus (strain Ueda107) (Pseudomonas fluorescens subsp. cellulosa).